The chain runs to 589 residues: Protein sprouty (589 aa).

Disordered stretches follow at residues 1-37, 102-194, and 239-320; these read MDRR…GVDH, RPSS…RPES, and LHLQ…MGLG. Composition is skewed to low complexity over residues 104–135 and 148–162; these read SSLS…SSSS and NNSI…INNN. Residues 163 to 172 are compositionally biased toward polar residues; that stretch reads FLSHFQSAEP. Residues 239 to 272 are compositionally biased toward low complexity; that stretch reads LHLQQHQQHLQQQQQQQQQQQQQQHLQHQQNQQH. Residues 276–286 are compositionally biased toward polar residues; the sequence is ATTTQATSVGS. Residues 380 to 499 enclose the SPR domain; it reads RCGRCRCEQC…CYGRFAGRGC (120 aa).

It belongs to the sprouty family. In terms of assembly, interacts with DRK and RasGAP1 proteins of the Ras pathway. In terms of tissue distribution, in ovary, expressed from stage 7 of oogenesis in the posterior follicle cells and during stage 9 when the follicle cells migrate posteriorly over the oocyte nucleus, expression is seen in the dorsal and lateral cells and is excluded from the ventral cells. Once the migration of follicle cells is complete expressed in the dorsal-anterior corner of the egg chamber. Expressed in the embryonic tracheal system, developing eye imaginal disk, embryonic chordotonal organ precursors, midline glia and wing imaginal disk.

Its subcellular location is the cell membrane. In terms of biological role, inhibitor of tracheal branching that restricts branch budding by antagonizing the BNL-FGF pathway (BNL: branchless, an fgf inducer of branching). Acts as an antagonist of EGFR-mediated signaling in the eye (where it is important for cell determination) midline glia, chordotonal organs, wing and ovarian follicle cells. The protein is Protein sprouty (sty) of Drosophila melanogaster (Fruit fly).